The chain runs to 108 residues: Thioredoxin C-2 (108 aa).

The 107-residue stretch at 2-108 (SATIVNTTDE…KLAAFIDQNI (107 aa)) folds into the Thioredoxin domain. C33 and C36 form a disulfide bridge.

It belongs to the thioredoxin family.

Functionally, participates in various redox reactions through the reversible oxidation of its active center dithiol to a disulfide and catalyzes dithiol-disulfide exchange reactions. The protein is Thioredoxin C-2 of Corynebacterium nephridii.